The primary structure comprises 454 residues: Neuronal acetylcholine receptor subunit alpha-5 (454 aa).

Residues 1-26 (MPLRARSRKPGAGPAARAPQAGVSEP) are disordered. Residues 1-29 (MPLRARSRKPGAGPAARAPQAGVSEPSFV) form the signal peptide. Residues 10–22 (PGAGPAARAPQAG) show a composition bias toward low complexity. Topologically, residues 30-240 (AKSEDRLFKH…IIRRLPLFYT (211 aa)) are extracellular. N-linked (GlcNAc...) asparagine glycans are attached at residues Asn-55, Asn-169, and Asn-215. Cys-156 and Cys-170 are oxidised to a cystine. A disulfide bridge connects residues Cys-220 and Cys-221. 3 helical membrane passes run 241–261 (LFLI…FYLP), 270–290 (LCTS…EIIP), and 303–323 (LVFT…AINI). The Cytoplasmic portion of the chain corresponds to 324 to 416 (HHRSSSTHNA…KFIAQVLDRM (93 aa)). Residues 417-437 (FLWAFLLVSIIGSLVLFIPVI) traverse the membrane as a helical segment. At 438 to 454 (HKWASIIVPVHIGSTNT) the chain is on the extracellular side.

It belongs to the ligand-gated ion channel (TC 1.A.9) family. Acetylcholine receptor (TC 1.A.9.1) subfamily. Alpha-5/CHRNA5 sub-subfamily. As to quaternary structure, neuronal AChR that forms heteropentamers composed of two different type of subunits: alpha and non-alpha (beta). CHRNA5/alpha-5 subunit is only able to form functional nAChRs when co-assembled with another alpha subunit, can be combined to CHRNA4/alpha-4 or CHRNA3/alpha-3 and CHRNB4/beta-4 or CHRNB2/beta-2 to give rise to functional receptors. Interacts with LYPD6.

The protein resides in the synaptic cell membrane. It is found in the cell membrane. The catalysed reaction is Ca(2+)(in) = Ca(2+)(out). The enzyme catalyses K(+)(in) = K(+)(out). It catalyses the reaction Na(+)(in) = Na(+)(out). Its activity is regulated as follows. Activated by a myriad of ligands such as acetylcholine, cytisine, nicotine, choline and epibatidine. In terms of biological role, component of neuronal acetylcholine receptors (nAChRs) that function as pentameric, ligand-gated cation channels with high calcium permeability among other activities. nAChRs are excitatory neurotrasnmitter receptors formed by a collection of nAChR subunits known to mediate synaptic transmission in the nervous system and the neuromuscular junction. Each nAchR subunit confers differential attributes to channel properties, including activation, deactivation and desensitization kinetics, pH sensitivity, cation permeability, and binding to allosteric modulators. Has an accessory rather than functional role and is only able to form functional nAChRs when co-assembled with another beta subunit. Participates in pentameric assemblies along with CHRNA3, CHRNA4, CHRNB2 and CHRNB4. Increases receptor sensitivity to acetylcholine and nicotine when associated with CHRNA4 and CHRNB2. Plays a role in nicotine addiction. The polypeptide is Neuronal acetylcholine receptor subunit alpha-5 (CHRNA5) (Gallus gallus (Chicken)).